The chain runs to 280 residues: Putative S-adenosyl-L-methionine-dependent methyltransferase FRAAL3836 (280 aa).

S-adenosyl-L-methionine contacts are provided by residues D121 and 150 to 151 (DL).

The protein belongs to the UPF0677 family.

Its function is as follows. Exhibits S-adenosyl-L-methionine-dependent methyltransferase activity. The protein is Putative S-adenosyl-L-methionine-dependent methyltransferase FRAAL3836 of Frankia alni (strain DSM 45986 / CECT 9034 / ACN14a).